A 293-amino-acid polypeptide reads, in one-letter code: N-acetylneuraminate lyase (293 aa).

Aceneuramate-binding residues include Ser-47, Thr-48, and Tyr-136. Tyr-136 (proton donor) is an active-site residue. Residue Lys-164 is the Schiff-base intermediate with substrate of the active site. Aceneuramate contacts are provided by Thr-166, Gly-188, Asp-190, Glu-191, Ser-207, and Tyr-251.

The protein belongs to the DapA family. NanA subfamily. As to quaternary structure, homotetramer.

It is found in the cytoplasm. It carries out the reaction aceneuramate = aldehydo-N-acetyl-D-mannosamine + pyruvate. It participates in amino-sugar metabolism; N-acetylneuraminate degradation; D-fructose 6-phosphate from N-acetylneuraminate: step 1/5. Functionally, catalyzes the reversible aldol cleavage of N-acetylneuraminic acid (sialic acid; Neu5Ac) to form pyruvate and N-acetylmannosamine (ManNAc) via a Schiff base intermediate. In Pasteurella multocida (strain Pm70), this protein is N-acetylneuraminate lyase.